A 508-amino-acid polypeptide reads, in one-letter code: MKKKNIYSIRKLGVGIASVTLGTLLISGGVTPAANAAQHDEAQQNAFYQVLNMPNLNADQRNGFIQSLKDDPSQSANVLGEAQKLNDSQAPKADAQQNKFNKDQQSAFYEILNMPNLNEEQRNGFIQSLKDDPSQSTNVLGEAKKLNESQAPKADNNFNKEQQNAFYEILNMPNLNEEQRNGFIQSLKDDPSQSANLLAEAKKLNESQAPKADNKFNKEQQNAFYEILHLPNLNEEQRNGFIQSLKDDPSQSANLLAEAKKLNDAQAPKADNKFNKEQQNAFYEILHLPNLTEEQRNGFIQSLKDDPSVSKEILAEAKKLNDAQAPKEEDNNKPGKEDGNKPGKEDGNKPGKEDNKKPGKEDGNKPGKEDNKKPGKEDGNKPGKEDGNKPGKEDGNKPGKEDGNKPGKEDGNGVHVVKPGDTVNDIAKANGTTADKIAADNKLADKNMIKPGQELVVDKKQPANHADANKAQALPETGEENPFIGTTVFGGLSLALGAALLAGRRREL.

Positions 1-36 (MKKKNIYSIRKLGVGIASVTLGTLLISGGVTPAANA) are cleaved as a signal peptide. A YSIRK-G/S signaling motif motif is present at residues 7 to 18 (YSIRKLGVGIAS). The Immunoglobulin-binding region E repeat unit spans residues 37 to 92 (AQHDEAQQNAFYQVLNMPNLNADQRNGFIQSLKDDPSQSANVLGEAQKLNDSQAPK). The stretch at 93–153 (ADAQQNKFNK…KKLNESQAPK (61 aa)) is one Immunoglobulin-binding region D repeat. An Immunoglobulin-binding region A repeat occupies 154–211 (ADNNFNKEQQNAFYEILNMPNLNEEQRNGFIQSLKDDPSQSANLLAEAKKLNESQAPK). The Immunoglobulin-binding region B repeat unit spans residues 212–269 (ADNKFNKEQQNAFYEILHLPNLNEEQRNGFIQSLKDDPSQSANLLAEAKKLNDAQAPK). The Immunoglobulin-binding region C repeat unit spans residues 270–327 (ADNKFNKEQQNAFYEILHLPNLTEEQRNGFIQSLKDDPSVSKEILAEAKKLNDAQAPK). Basic and acidic residues predominate over residues 318–412 (KKLNDAQAPK…GNKPGKEDGN (95 aa)). 2 disordered regions span residues 318–424 (KKLN…DTVN) and 459–479 (KKQP…ETGE). 12 repeat units span residues 333–340 (KPGKEDGN), 341–348 (KPGKEDGN), 349–356 (KPGKEDNK), 357–364 (KPGKEDGN), 365–372 (KPGKEDNK), 373–380 (KPGKEDGN), 381–388 (KPGKEDGN), 389–396 (KPGKEDGN), 397–405 (KPGKEDGNK), 406–413 (PGKEDGNG), 414–421 (VHVVKPGD), and 422–429 (TVNDIAKA). Residues 333–408 (KPGKEDGNKP…GKEDGNKPGK (76 aa)) form a 12 X 8 AA approximate tandem repeats region. A LysM domain is found at 413–457 (GVHVVKPGDTVNDIAKANGTTADKIAADNKLADKNMIKPGQELVV). The short motif at 474–478 (LPETG) is the LPXTG sorting signal element. T477 bears the Pentaglycyl murein peptidoglycan amidated threonine mark. Positions 478-508 (GEENPFIGTTVFGGLSLALGAALLAGRRREL) are cleaved as a propeptide — removed by sortase.

Belongs to the immunoglobulin-binding protein SpA family. In terms of assembly, interacts with host TNFRSF1A; this interaction leads to the stimulation of both surface expression and shedding of TNFRSF1A.

The protein localises to the secreted. It is found in the cell wall. Plays a role in the inhibition of the host innate and adaptive immune responses. Possesses five immunoglobulin-binding domains that capture both the fragment crystallizable region (Fc region) and the Fab region (part of Ig that identifies antigen) of immunoglobulins. In turn, Staphylococcus aureus is protected from phagocytic killing via inhibition of Ig Fc region. In addition, the host elicited B-cell response is prevented due to a decrease of antibody-secreting cell proliferation that enter the bone marrow, thereby decreasing long-term antibody production. Inhibits osteogenesis by preventing osteoblast proliferation and expression of alkaline phosphatase, type I collagen, osteopontin and osteocalcin. Acts directly as a pro-inflammatory factor in the lung through its ability to bind and activate tumor necrosis factor alpha receptor 1/TNFRSF1A. In Staphylococcus aureus, this protein is Immunoglobulin G-binding protein A (spa).